Consider the following 404-residue polypeptide: S-adenosylmethionine synthase (404 aa).

Positions 1-13 (MSQSRYFFTSESV) are enriched in polar residues. A disordered region spans residues 1 to 21 (MSQSRYFFTSESVSEGHPDKV). Histidine 17 lines the ATP pocket. Aspartate 19 contributes to the Mg(2+) binding site. Glutamate 45 provides a ligand contact to K(+). 2 residues coordinate L-methionine: glutamate 58 and glutamine 101. Residues 101 to 111 (QSPDINRGVDR) are flexible loop. Residues 172–174 (DAK), 245–246 (RF), aspartate 254, 260–261 (RK), alanine 277, and lysine 281 contribute to the ATP site. Aspartate 254 provides a ligand contact to L-methionine. Lysine 285 contributes to the L-methionine binding site.

The protein belongs to the AdoMet synthase family. Homotetramer; dimer of dimers. It depends on Mg(2+) as a cofactor. Requires K(+) as cofactor.

It is found in the cytoplasm. It catalyses the reaction L-methionine + ATP + H2O = S-adenosyl-L-methionine + phosphate + diphosphate. It functions in the pathway amino-acid biosynthesis; S-adenosyl-L-methionine biosynthesis; S-adenosyl-L-methionine from L-methionine: step 1/1. Its function is as follows. Catalyzes the formation of S-adenosylmethionine (AdoMet) from methionine and ATP. The overall synthetic reaction is composed of two sequential steps, AdoMet formation and the subsequent tripolyphosphate hydrolysis which occurs prior to release of AdoMet from the enzyme. The polypeptide is S-adenosylmethionine synthase (Chlorobium phaeobacteroides (strain DSM 266 / SMG 266 / 2430)).